The chain runs to 208 residues: Outer-membrane lipoprotein carrier protein (208 aa).

The signal sequence occupies residues 1-22 (MKKIFTIAALSLPLFCHLPAMA).

Belongs to the LolA family. In terms of assembly, monomer.

It localises to the periplasm. Functionally, participates in the translocation of lipoproteins from the inner membrane to the outer membrane. Only forms a complex with a lipoprotein if the residue after the N-terminal Cys is not an aspartate (The Asp acts as a targeting signal to indicate that the lipoprotein should stay in the inner membrane). The sequence is that of Outer-membrane lipoprotein carrier protein from Shewanella pealeana (strain ATCC 700345 / ANG-SQ1).